The primary structure comprises 495 residues: N-succinylglutamate 5-semialdehyde dehydrogenase (495 aa).

228 to 233 serves as a coordination point for NAD(+); that stretch reads GSYATG. Active-site residues include glutamate 251 and cysteine 285.

Belongs to the aldehyde dehydrogenase family. AstD subfamily.

The catalysed reaction is N-succinyl-L-glutamate 5-semialdehyde + NAD(+) + H2O = N-succinyl-L-glutamate + NADH + 2 H(+). The protein operates within amino-acid degradation; L-arginine degradation via AST pathway; L-glutamate and succinate from L-arginine: step 4/5. Catalyzes the NAD-dependent reduction of succinylglutamate semialdehyde into succinylglutamate. This is N-succinylglutamate 5-semialdehyde dehydrogenase from Legionella pneumophila (strain Corby).